A 203-amino-acid chain; its full sequence is Ras-related protein Rab-24 (203 aa).

Tyr-17 is modified (phosphotyrosine). Residues Gly-19, Lys-20, Thr-21, and Thr-40 each coordinate GTP. Residues Thr-21, Thr-40, and Asp-63 each contribute to the Mg(2+) site. The interval 30 to 45 is switch I; sequence DRFLVGPYQNTIGAAF. The segment at 63–80 is switch II; that stretch reads DTAGSERYEAMSRIYYRG. Residues Gly-66, Lys-121, Asp-123, and Lys-156 each coordinate GTP. Tyr-172 carries the post-translational modification Phosphotyrosine. Residues Cys-200 and Cys-201 are each lipidated (S-geranylgeranyl cysteine).

This sequence belongs to the small GTPase superfamily. Rab family. As to quaternary structure, interacts with ZFYVE20. Does not interact with the GDP dissociation inhibitors ARHGDIA and ARHGDIB. The cofactor is Mg(2+). Prenylated; prenylation is required for RAB24 localization to autophagosomes. Isoprenylation is inefficient compared to other Rab family members. In terms of processing, phosphorylated at Tyr-17 and Tyr-172. Cytosolic pool of RAB24 is more phosphorylated than the membrane-associated pool. Widely expressed, with highest expression in brain.

It is found in the cytoplasm. It localises to the cytosol. The protein localises to the membrane. Its subcellular location is the cytoplasmic vesicle. The protein resides in the autophagosome membrane. It is found in the perinuclear region. It localises to the cytoskeleton. The protein localises to the spindle. The catalysed reaction is GTP + H2O = GDP + phosphate + H(+). Regulated by guanine nucleotide exchange factors (GEFs) which promote the exchange of bound GDP for free GTP. Regulated by GTPase activating proteins (GAPs) which increase the GTP hydrolysis activity. Inhibited by GDP dissociation inhibitors (GDIs). Functionally, the small GTPases Rab are key regulators of intracellular membrane trafficking, from the formation of transport vesicles to their fusion with membranes. Rabs cycle between an inactive GDP-bound form and an active GTP-bound form that is able to recruit to membranes different sets of downstream effectors directly responsible for vesicle formation, movement, tethering and fusion. RAB24 is an atypical RAB protein that presents low GTPase activity and thereby exists predominantly in the GTP-bound active state. RAB24 is required for the clearance of late autophagic vacuoles under basal conditions. It is not needed for starvation-induced autophagy. Involved in the modulation of meiotic apparatus assembly and meiotic progression during oocyte maturation, possibly through regulation of kinetochore-microtubule interaction. This chain is Ras-related protein Rab-24, found in Mus musculus (Mouse).